Consider the following 272-residue polypeptide: MPELPEVETTKTSLLPLLNQRVKSVQVRDSRLRWPIPEDISRLAGQRLTSLKRRSKYILAEFETDQMLWHLGMSGSFRVATAADELRKHDHLILTFDDGTELRYHDPRRFGCILWLNEESQSKLLNPLGPEPLSEDFNADYLYQKLKSKQVGIKIALMDNHVVVGVGNIYATESLFNLGIHPAQPASSLSKPQILALVQEIKRILKFAIELGGSTLRDYTNAMGENGYFQQTLLAYGRAGEMCVNCETPLENLKLGQRASVFCPQCQPLKRK.

The active-site Schiff-base intermediate with DNA is the Pro2. Residue Glu3 is the Proton donor of the active site. The active-site Proton donor; for beta-elimination activity is the Lys56. Residues His89, Arg108, and Lys149 each contribute to the DNA site. Residues 234-268 form an FPG-type zinc finger; sequence LAYGRAGEMCVNCETPLENLKLGQRASVFCPQCQP. Arg258 serves as the catalytic Proton donor; for delta-elimination activity.

Belongs to the FPG family. In terms of assembly, monomer. Zn(2+) serves as cofactor.

It catalyses the reaction Hydrolysis of DNA containing ring-opened 7-methylguanine residues, releasing 2,6-diamino-4-hydroxy-5-(N-methyl)formamidopyrimidine.. The enzyme catalyses 2'-deoxyribonucleotide-(2'-deoxyribose 5'-phosphate)-2'-deoxyribonucleotide-DNA = a 3'-end 2'-deoxyribonucleotide-(2,3-dehydro-2,3-deoxyribose 5'-phosphate)-DNA + a 5'-end 5'-phospho-2'-deoxyribonucleoside-DNA + H(+). In terms of biological role, involved in base excision repair of DNA damaged by oxidation or by mutagenic agents. Acts as a DNA glycosylase that recognizes and removes damaged bases. Has a preference for oxidized purines, such as 7,8-dihydro-8-oxoguanine (8-oxoG). Has AP (apurinic/apyrimidinic) lyase activity and introduces nicks in the DNA strand. Cleaves the DNA backbone by beta-delta elimination to generate a single-strand break at the site of the removed base with both 3'- and 5'-phosphates. The sequence is that of Formamidopyrimidine-DNA glycosylase from Acinetobacter baylyi (strain ATCC 33305 / BD413 / ADP1).